The primary structure comprises 481 residues: UDP-N-acetylmuramoylalanine--D-glutamate ligase (481 aa).

ATP is bound at residue 108–114; it reads GTNGKTS.

The protein belongs to the MurCDEF family.

The protein localises to the cytoplasm. The enzyme catalyses UDP-N-acetyl-alpha-D-muramoyl-L-alanine + D-glutamate + ATP = UDP-N-acetyl-alpha-D-muramoyl-L-alanyl-D-glutamate + ADP + phosphate + H(+). Its pathway is cell wall biogenesis; peptidoglycan biosynthesis. In terms of biological role, cell wall formation. Catalyzes the addition of glutamate to the nucleotide precursor UDP-N-acetylmuramoyl-L-alanine (UMA). This chain is UDP-N-acetylmuramoylalanine--D-glutamate ligase, found in Bifidobacterium longum (strain DJO10A).